The following is a 369-amino-acid chain: Protein RIC-3 (369 aa).

Residues 1–28 (MAYSTVQRVALASGLVLALSLLLPKAFL) form the signal peptide. Residues 29-95 (SRGKRQEPPP…AGGGGSGRGL (67 aa)) lie on the Lumenal side of the membrane. A disordered region spans residues 30-67 (RGKRQEPPPTPEGKLGRFPPMMHHHQAPSDGQTPGARF). The chain crosses the membrane as a helical span at residues 96–116 (MGQIIPIYGFGIFLYILYILF). Residues 117-369 (KLSKGKTTAE…LRKRNPQGLE (253 aa)) lie on the Cytoplasmic side of the membrane. Residues 140 to 169 (RKITSFELAQLQEKLKETEAAMEKLINRVG) adopt a coiled-coil conformation. Position 202 is an N6-acetyllysine; alternate (Lys-202). Lys-202 participates in a covalent cross-link: Glycyl lysine isopeptide (Lys-Gly) (interchain with G-Cter in ubiquitin); alternate. Disordered regions lie at residues 272 to 295 (ESDH…SVTS) and 316 to 369 (LAEN…QGLE). Positions 332–346 (ETTKEEWSQDFKDEG) are enriched in basic and acidic residues. A compositionally biased stretch (basic residues) spans 360-369 (LRKRNPQGLE).

This sequence belongs to the ric-3 family. Monomer and homodimer. Interacts with CHRNA7, CHRNA3, CHRNA4, CHRNB2, CHRNB4 and HTR3A. As to expression, broadly expressed, with high levels in muscle, brain, heart, pancreas and testis. In the central nervous system, highest levels are detected in the cerebellum and pituitary gland. Over-expressed in brains from patients with bipolar disease or schizophrenia. Isoform 5 is predominantly expressed in the brain.

Its subcellular location is the endoplasmic reticulum membrane. It localises to the golgi apparatus membrane. Its function is as follows. Molecular chaperone which facilitates proper subunit assembly and surface trafficking of alpha-7 (CHRNA7) and alpha-8 (CHRNA8) nicotinic acetylcholine receptors. May also promote functional expression of homomeric serotoninergic 5-HT3 receptors, and of heteromeric acetylcholine receptors alpha-3/beta-2, alpha-3/beta-4, alpha-4/beta-2 and alpha-4/beta-4. This is Protein RIC-3 (RIC3) from Homo sapiens (Human).